A 127-amino-acid chain; its full sequence is Small ribosomal subunit protein uS13 (127 aa).

Residues 95–118 show a composition bias toward basic residues; that stretch reads GLPVRGQRTHTNARTRKGPKKGLV. Positions 95–127 are disordered; sequence GLPVRGQRTHTNARTRKGPKKGLVRKAAAPAPK.

Belongs to the universal ribosomal protein uS13 family. Part of the 30S ribosomal subunit. Forms a loose heterodimer with protein S19. Forms two bridges to the 50S subunit in the 70S ribosome.

Functionally, located at the top of the head of the 30S subunit, it contacts several helices of the 16S rRNA. In the 70S ribosome it contacts the 23S rRNA (bridge B1a) and protein L5 of the 50S subunit (bridge B1b), connecting the 2 subunits; these bridges are implicated in subunit movement. Contacts the tRNAs in the A and P-sites. The chain is Small ribosomal subunit protein uS13 from Anaeromyxobacter sp. (strain Fw109-5).